Here is a 475-residue protein sequence, read N- to C-terminus: Ankyrin repeat, SAM and basic leucine zipper domain-containing protein 1 (475 aa).

A disordered region spans residues 1–25 (MAAGPLRGLAVAGGGESSDSEDDGW). Serine 17, serine 18, and serine 20 each carry phosphoserine. ANK repeat units lie at residues 45 to 74 (ERQE…SVDT), 78 to 107 (YGWT…NASF), 110 to 144 (DKQT…DPNV), 148 to 177 (RLMT…EVNT), 181 to 210 (NGYT…NKMI), and 214 to 243 (DGKT…PLEG). An SAM domain is found at 272–334 (SYTAFGDLEI…KIMAALKELE (63 aa)).

In terms of assembly, interacts with DDX4, PIWIL1, RANBP9 and TDRD1.

Its subcellular location is the cytoplasm. Functionally, plays a central role during spermatogenesis by repressing transposable elements and preventing their mobilization, which is essential for the germline integrity. Acts via the piRNA metabolic process, which mediates the repression of transposable elements during meiosis by forming complexes composed of piRNAs and Piwi proteins and governs the methylation and subsequent repression of transposons. Its association with pi-bodies suggests a participation in the primary piRNAs metabolic process. Required prior to the pachytene stage to facilitate the production of multiple types of piRNAs, including those associated with repeats involved in the regulation of retrotransposons. May act by mediating protein-protein interactions during germ cell maturation. The polypeptide is Ankyrin repeat, SAM and basic leucine zipper domain-containing protein 1 (ASZ1) (Bos taurus (Bovine)).